Reading from the N-terminus, the 510-residue chain is NAD(P)H-quinone oxidoreductase subunit 2, chloroplastic (510 aa).

Transmembrane regions (helical) follow at residues 28–48 (DGSFIFPECILIFGLILLLII), 57–77 (IPWLYFISSTSLVMSITTLLF), 99–119 (IFQFLILLCSTLCIPLSVEYI), 124–144 (MALTEFLLFVLTATLGGMFLC), 149–169 (LITIFVAPECFSLCSYLLSGY), 183–203 (YLLMGGTSSSILVHGFSWLYG), 227–247 (PGISIALIFITVGIGFKLSPA), 295–315 (WHLLLEILAILSMILGNLIAI), 323–343 (MLAYSSIGQIGYVIIGIIVGD), 354–374 (YMLFYISMNLGTFACIVLFGL), 395–415 (ALSLALCLLSLGGLPPLAGFF), 418–438 (LYLFWCGWQAGLYLLVLIGLL), and 484–504 (MIVCVIASTIPGISMNPIIAI).

This sequence belongs to the complex I subunit 2 family. NDH is composed of at least 16 different subunits, 5 of which are encoded in the nucleus.

The protein localises to the plastid. It localises to the chloroplast thylakoid membrane. The catalysed reaction is a plastoquinone + NADH + (n+1) H(+)(in) = a plastoquinol + NAD(+) + n H(+)(out). It catalyses the reaction a plastoquinone + NADPH + (n+1) H(+)(in) = a plastoquinol + NADP(+) + n H(+)(out). Functionally, NDH shuttles electrons from NAD(P)H:plastoquinone, via FMN and iron-sulfur (Fe-S) centers, to quinones in the photosynthetic chain and possibly in a chloroplast respiratory chain. The immediate electron acceptor for the enzyme in this species is believed to be plastoquinone. Couples the redox reaction to proton translocation, and thus conserves the redox energy in a proton gradient. The polypeptide is NAD(P)H-quinone oxidoreductase subunit 2, chloroplastic (Silene latifolia (White campion)).